The sequence spans 354 residues: Lysine racemase (354 aa).

Lys-36 is modified (N6-(pyridoxal phosphate)lysine).

This sequence belongs to the alanine racemase family. In terms of assembly, homodimer. The cofactor is pyridoxal 5'-phosphate.

It catalyses the reaction L-lysine = D-lysine. It carries out the reaction L-ornithine = D-ornithine. The protein operates within cell wall biogenesis; peptidoglycan biosynthesis. In terms of biological role, catalyzes the interconversion of D-lysine and L-lysine. Has also high activity toward ornithine, and weaker activity toward alanine. Contributes to production of D-lysine and D-alanine for use as peptidoglycan components. This chain is Lysine racemase, found in Thermotoga maritima (strain ATCC 43589 / DSM 3109 / JCM 10099 / NBRC 100826 / MSB8).